The primary structure comprises 256 residues: Hydroxyethylthiazole kinase (256 aa).

Methionine 38 serves as a coordination point for substrate. Positions 114 and 159 each coordinate ATP. Glycine 186 contributes to the substrate binding site.

It belongs to the Thz kinase family. The cofactor is Mg(2+).

The enzyme catalyses 5-(2-hydroxyethyl)-4-methylthiazole + ATP = 4-methyl-5-(2-phosphooxyethyl)-thiazole + ADP + H(+). It participates in cofactor biosynthesis; thiamine diphosphate biosynthesis; 4-methyl-5-(2-phosphoethyl)-thiazole from 5-(2-hydroxyethyl)-4-methylthiazole: step 1/1. Its function is as follows. Catalyzes the phosphorylation of the hydroxyl group of 4-methyl-5-beta-hydroxyethylthiazole (THZ). The protein is Hydroxyethylthiazole kinase of Streptococcus agalactiae serotype Ia (strain ATCC 27591 / A909 / CDC SS700).